We begin with the raw amino-acid sequence, 63 residues long: Alpha-conotoxin-like Am1.6 (63 aa).

Positions 1-21 (MGMRMMFTVFLLVVLATTVVS) are cleaved as a signal peptide. Residues 22-46 (FTSYRASDGRNAAAKASDLIALTVR) constitute a propeptide that is removed on maturation. A ser-Xaa-Pro motif, crucial for potent interaction with nAChR region spans residues 50 to 52 (SRP).

The protein belongs to the conotoxin A superfamily. Post-translationally, is not hydroxylated. Contains 2 disulfide bonds. In terms of tissue distribution, expressed by the venom duct.

Its subcellular location is the secreted. Its function is as follows. Alpha-conotoxins act on postsynaptic membranes, they bind to the nicotinic acetylcholine receptors (nAChR) and thus inhibit them. The chain is Alpha-conotoxin-like Am1.6 from Conus amadis (Amadis cone).